A 1513-amino-acid polypeptide reads, in one-letter code: Lid2 complex component lid2 (1513 aa).

The JmjN domain occupies glycine 56 to proline 97. Residues tyrosine 121–serine 212 form the ARID domain. Positions serine 211 to glutamine 253 are disordered. Polar residues predominate over residues threonine 230–glutamine 253. The PHD-type 1 zinc-finger motif lies at glycine 268–asparagine 318. A JmjC domain is found at lysine 408 to valine 574. Serine 722 is subject to Phosphoserine. Residues leucine 1063–glycine 1086 are disordered. Over residues alanine 1076–glycine 1086 the composition is skewed to basic and acidic residues. The PHD-type 2 zinc-finger motif lies at lysine 1093 to arginine 1145. Residues cysteine 1096–aspartate 1143 form an RING-type 1; degenerate zinc finger. Disordered regions lie at residues alanine 1244–glutamine 1268 and alanine 1280–asparagine 1327. The span at threonine 1257–glutamine 1268 shows a compositional bias: basic residues. A compositionally biased stretch (basic and acidic residues) spans valine 1301–proline 1313. Polar residues predominate over residues asparagine 1316–lysine 1326. The PHD-type 3 zinc-finger motif lies at asparagine 1352–glutamine 1403. The RING-type 2; degenerate zinc finger occupies serine 1354–methionine 1401.

In terms of assembly, component of the Lid2 complex composed of ash2, jmj3, lid2, sdc1 and snt2.

The protein localises to the nucleus. In Schizosaccharomyces pombe (strain 972 / ATCC 24843) (Fission yeast), this protein is Lid2 complex component lid2 (lid2).